Here is a 158-residue protein sequence, read N- to C-terminus: Tryptophan-rich protein TspO (158 aa).

Helical transmembrane passes span 5-25, 48-68, 79-99, 105-125, and 134-154; these read ILTL…GSTF, LFPP…AKVL, VGVV…ASFF, LAGL…MLAF, and LLLV…FTIL.

The protein belongs to the TspO/BZRP family.

Its subcellular location is the membrane. It localises to the cell membrane. In terms of biological role, binds tetrapyrroles and promotes the photooxidative degradation of protoporphyrin IX. Can bind the benzodiazepine receptor agonist PK-11195 (in vitro); this interferes with photooxidative tetrapyrrole degradation. May play a role in the transmembrane transport of tetrapyrroles and similar compounds. The sequence is that of Tryptophan-rich protein TspO from Chlorobaculum tepidum (strain ATCC 49652 / DSM 12025 / NBRC 103806 / TLS) (Chlorobium tepidum).